The sequence spans 442 residues: Phosphoglucosamine mutase (442 aa).

Residue Ser98 is the Phosphoserine intermediate of the active site. Ser98, Asp236, Asp238, and Asp240 together coordinate Mg(2+). Residue Ser98 is modified to Phosphoserine.

The protein belongs to the phosphohexose mutase family. Mg(2+) serves as cofactor. Post-translationally, activated by phosphorylation.

The enzyme catalyses alpha-D-glucosamine 1-phosphate = D-glucosamine 6-phosphate. In terms of biological role, catalyzes the conversion of glucosamine-6-phosphate to glucosamine-1-phosphate. This chain is Phosphoglucosamine mutase, found in Natranaerobius thermophilus (strain ATCC BAA-1301 / DSM 18059 / JW/NM-WN-LF).